The sequence spans 232 residues: Fibrillarin-like rRNA/tRNA 2'-O-methyltransferase (232 aa).

Residues 89–90, 108–109, 133–134, and 153–156 contribute to the S-adenosyl-L-methionine site; these read TT, EF, DA, and DIAQ.

Belongs to the methyltransferase superfamily. Fibrillarin family. In terms of assembly, interacts with nop5. Component of box C/D small ribonucleoprotein (sRNP) particles that contain rpl7ae, FlpA and nop5, plus a guide RNA.

Functionally, involved in pre-rRNA and tRNA processing. Utilizes the methyl donor S-adenosyl-L-methionine to catalyze the site-specific 2'-hydroxyl methylation of ribose moieties in rRNA and tRNA. Site specificity is provided by a guide RNA that base pairs with the substrate. Methylation occurs at a characteristic distance from the sequence involved in base pairing with the guide RNA. The polypeptide is Fibrillarin-like rRNA/tRNA 2'-O-methyltransferase (Methanopyrus kandleri (strain AV19 / DSM 6324 / JCM 9639 / NBRC 100938)).